The primary structure comprises 106 residues: UPF0145 protein (106 aa).

The protein belongs to the UPF0145 family.

In Listeria grayi (Listeria murrayi), this protein is UPF0145 protein.